The sequence spans 539 residues: F-box only protein 31 (539 aa).

The segment at 11-53 (GPSRGCRRRQQRRGPAETAAADSEPDTDPEEERIEASAGVGGG) is disordered. Serine 33 carries the phosphoserine modification. Serine 33 carries the post-translational modification Phosphoserine; by PKB/AKT1. Residues 33–43 (SEPDTDPEEER) show a composition bias toward acidic residues. Threonine 37 carries the post-translational modification Phosphothreonine. A D box motif is present at residues 64–69 (RCSLLE). An F-box domain is found at 64 to 110 (RCSLLELPPELLVEIFASLPGTDLPSLAQVCTKFRRILHTDTIWRRR). Cysteine 206, histidine 214, cysteine 230, and histidine 236 together coordinate Zn(2+). Serine 278 is modified (phosphoserine; by ATM). The DDL motif signature appears at 297–299 (DDL). Positions 377-397 (VRQEQQEGGHEAGEGRGRQGP) are enriched in basic and acidic residues. Residues 377 to 446 (VRQEQQEGGH…PAQCGQGQPF (70 aa)) are disordered. Threonine 419 is modified (phosphothreonine; by MTOR). Phosphoserine is present on serine 480.

This sequence belongs to the FBXO31 family. In terms of assembly, part of a SCF (SKP1-cullin-F-box) protein ligase complex SCF(FBXO31) composed of CUL1, SKP1, RBX1 and FBXO31. Interacts (when phosphorylated at Ser-33) with CDC20, promoting ubiquitination by the APC/C complex. Phosphorylation at Ser-278 by ATM following gamma-irradiation results in its stabilization. Phosphorylation at Thr-419 and Ser-480 in absence of stress promotes its ubiquitination and degradation by the SCF(FBXO46) complex. Phosphorylation at Ser-33 by AKT1 promotes association with CDC20 and ubiquitination by the APC/C complex. In terms of processing, ubiquitinated by the SCF(FBXO46) complex in absence of stress, promoting its degradation. Ubiquitinated by the APC/C complex following phosphorylation at Ser-33, leading to its degradation by the proteasome. In terms of tissue distribution, highly expressed in brain. Expressed at moderate levels in most tissues, except bone marrow.

The protein localises to the cytoplasm. Its subcellular location is the cytoskeleton. The protein resides in the microtubule organizing center. It localises to the centrosome. The protein operates within protein modification; protein ubiquitination. In terms of biological role, substrate-recognition component of the SCF(FBXO31) protein ligase complex, which specifically mediates the ubiquitination of proteins amidated at their C-terminus in response to oxidative stress, leading to their degradation by the proteasome. FBXO31 specifically recognizes and binds C-terminal peptides bearing an amide: C-terminal amidation in response to oxidative stress takes place following protein fragmentation. The SCF(FBXO31) also plays a role in G1 arrest following DNA damage by mediating ubiquitination of phosphorylated cyclin-D1 (CCND1), promoting its degradation by the proteasome, resulting in G1 arrest. The SCF(FBXO31) complex is however not a major regulator of CCND1 stability during the G1/S transition. In response to genotoxic stress, the SCF(FBXO31) complex directs ubiquitination and degradation of phosphorylated MDM2, thereby promoting p53/TP53-mediated DNA damage response. SCF(FBXO31) complex is required for genomic integrity by catalyzing ubiquitination and degradation of cyclin-A (CCNA1 and/or CCNA2) during the G1 phase. In response to genotoxic stress, the SCF(FBXO31) complex directs ubiquitination and degradation of phosphorylated FBXO46 and MAP2K6. SCF(FBXO31) complex promotes ubiquitination and degradation of CDT1 during the G2 phase to prevent re-replication. The SCF(FBXO31) complex also mediates ubiquitination and degradation of DUSP6, OGT and PARD6A. This is F-box only protein 31 from Homo sapiens (Human).